Consider the following 445-residue polypeptide: Serine--tRNA ligase (445 aa).

250-252 (TAE) provides a ligand contact to L-serine. 281–283 (RAE) lines the ATP pocket. Glutamate 304 lines the L-serine pocket. 368–371 (EISS) provides a ligand contact to ATP. Serine 404 contacts L-serine.

It belongs to the class-II aminoacyl-tRNA synthetase family. Type-1 seryl-tRNA synthetase subfamily. In terms of assembly, homodimer. The tRNA molecule binds across the dimer.

The protein resides in the cytoplasm. It catalyses the reaction tRNA(Ser) + L-serine + ATP = L-seryl-tRNA(Ser) + AMP + diphosphate + H(+). It carries out the reaction tRNA(Sec) + L-serine + ATP = L-seryl-tRNA(Sec) + AMP + diphosphate + H(+). Its pathway is aminoacyl-tRNA biosynthesis; selenocysteinyl-tRNA(Sec) biosynthesis; L-seryl-tRNA(Sec) from L-serine and tRNA(Sec): step 1/1. In terms of biological role, catalyzes the attachment of serine to tRNA(Ser). Is also able to aminoacylate tRNA(Sec) with serine, to form the misacylated tRNA L-seryl-tRNA(Sec), which will be further converted into selenocysteinyl-tRNA(Sec). In Azorhizobium caulinodans (strain ATCC 43989 / DSM 5975 / JCM 20966 / LMG 6465 / NBRC 14845 / NCIMB 13405 / ORS 571), this protein is Serine--tRNA ligase.